The chain runs to 616 residues: Leucine aminopeptidase (616 aa).

Substrate contacts are provided by residues 128–130 and 282–286; these read QCQ and GGMEN. Residue H309 coordinates Zn(2+). Residue E310 is the Proton acceptor of the active site. Zn(2+) contacts are provided by H313 and E332. Y397 functions as the Proton donor in the catalytic mechanism. 566–568 provides a ligand contact to substrate; sequence RMK.

The protein belongs to the peptidase M1 family. The cofactor is Zn(2+).

Its subcellular location is the cytoplasm. The catalysed reaction is an epoxide + H2O = an ethanediol. Functionally, aminopeptidase that preferentially cleaves di- and tripeptides. Also has low epoxide hydrolase activity (in vitro). Can hydrolyze the epoxide leukotriene LTA(4) but it forms preferentially 5,6-dihydroxy-7,9,11,14-eicosatetraenoic acid rather than the cytokine leukotriene B(4) as the product compared to the homologous mammalian enzyme (in vitro). The chain is Leucine aminopeptidase (LKHA4) from Arabidopsis thaliana (Mouse-ear cress).